The following is an 859-amino-acid chain: Active breakpoint cluster region-related protein (859 aa).

The tract at residues 26 to 84 (TDEYDGEGNEEQKGPPEGSETMPYIDESPTMSPQLSARSQGGGDGVSPTPPEGLAPGVE) is disordered. The segment covering 54-64 (PTMSPQLSARS) has biased composition (polar residues). Position 57 is a phosphoserine (serine 57). The DH domain maps to 91–284 (MRKLVLSGFL…QNFLSSINED (194 aa)). Positions 301–459 (QLVKDGFLVE…WREAIQKLQK (159 aa)) constitute a PH domain. Positions 484–613 (TVHNIPVTSN…ETKNWHTDVI (130 aa)) constitute a C2 domain. The Rho-GAP domain maps to 647–845 (VKISVVTKRE…YYLQHPPISF (199 aa)).

Interacts with DLG4. In terms of tissue distribution, highly enriched in the brain. Much weaker expression in heart, lung and muscle.

It is found in the cell projection. The protein resides in the dendritic spine. It localises to the axon. The protein localises to the synapse. Functionally, protein with a unique structure having two opposing regulatory activities toward small GTP-binding proteins. The C-terminus is a GTPase-activating protein domain which stimulates GTP hydrolysis by RAC1, RAC2 and CDC42. Accelerates the intrinsic rate of GTP hydrolysis of RAC1 or CDC42, leading to down-regulation of the active GTP-bound form. The central Dbl homology (DH) domain functions as a guanine nucleotide exchange factor (GEF) that modulates the GTPases CDC42, RHOA and RAC1. Promotes the conversion of CDC42, RHOA and RAC1 from the GDP-bound to the GTP-bound form. Functions as an important negative regulator of neuronal RAC1 activity. Regulates macrophage functions such as CSF-1 directed motility and phagocytosis through the modulation of RAC1 activity. In Homo sapiens (Human), this protein is Active breakpoint cluster region-related protein.